We begin with the raw amino-acid sequence, 72 residues long: Long neurotoxin OH-5 (72 aa).

5 disulfides stabilise this stretch: cysteine 3–cysteine 22, cysteine 15–cysteine 43, cysteine 28–cysteine 32, cysteine 47–cysteine 58, and cysteine 59–cysteine 64.

The protein belongs to the three-finger toxin family. Long-chain subfamily. Type II alpha-neurotoxin sub-subfamily. In terms of tissue distribution, expressed by the venom gland.

Its subcellular location is the secreted. Binds with high affinity to muscular (alpha-1/CHRNA1) and neuronal (alpha-7/CHRNA7) nicotinic acetylcholine receptor (nAChR) and inhibits acetylcholine from binding to the receptor, thereby impairing neuromuscular and neuronal transmission. This Ophiophagus hannah (King cobra) protein is Long neurotoxin OH-5.